The following is a 483-amino-acid chain: ATP synthase subunit beta (483 aa).

ATP is bound at residue 169–176; the sequence is GGAGVGKT.

This sequence belongs to the ATPase alpha/beta chains family. F-type ATPases have 2 components, CF(1) - the catalytic core - and CF(0) - the membrane proton channel. CF(1) has five subunits: alpha(3), beta(3), gamma(1), delta(1), epsilon(1). CF(0) has three main subunits: a(1), b(2) and c(9-12). The alpha and beta chains form an alternating ring which encloses part of the gamma chain. CF(1) is attached to CF(0) by a central stalk formed by the gamma and epsilon chains, while a peripheral stalk is formed by the delta and b chains.

The protein resides in the cell membrane. The enzyme catalyses ATP + H2O + 4 H(+)(in) = ADP + phosphate + 5 H(+)(out). Its function is as follows. Produces ATP from ADP in the presence of a proton gradient across the membrane. The catalytic sites are hosted primarily by the beta subunits. In Corynebacterium glutamicum (strain ATCC 13032 / DSM 20300 / JCM 1318 / BCRC 11384 / CCUG 27702 / LMG 3730 / NBRC 12168 / NCIMB 10025 / NRRL B-2784 / 534), this protein is ATP synthase subunit beta.